Here is a 115-residue protein sequence, read N- to C-terminus: MKTFFRTVLFGSLMAVCANSYALSESEAEDMADLTAVFVFLKNDCGYQNLPNGQIRRALVFFAQQNQWDLSNYDTFDMKALGEDSYRDLSGIGIPVAKKCKALARDSLSLLAYVK.

An N-terminal signal peptide occupies residues 1–20; the sequence is MKTFFRTVLFGSLMAVCANS.

This is an uncharacterized protein from Escherichia coli O6:H1 (strain CFT073 / ATCC 700928 / UPEC).